The following is a 180-amino-acid chain: Cytidylate kinase (180 aa).

7–15 contributes to the ATP binding site; it reads GLPGSGTTT.

This sequence belongs to the cytidylate kinase family. Type 2 subfamily.

It localises to the cytoplasm. It carries out the reaction CMP + ATP = CDP + ADP. The enzyme catalyses dCMP + ATP = dCDP + ADP. In Methanosarcina acetivorans (strain ATCC 35395 / DSM 2834 / JCM 12185 / C2A), this protein is Cytidylate kinase.